A 445-amino-acid chain; its full sequence is MAAFSLSAKQILSPSTHRPSLSKTTTADSSLRFRNPHSLSLRCSSLSSSSNVGRTRLMRASASSTAPVMDTSPTKAVSSAPTIVDVDLGDRSYPIYIGSGLLDQPDLLQRHVHGKRVLVVTNSTVAPIYLDKVVGALTNGNPNVSVESVILPDGEKYKNMDTLMKVFDKAIESRLDRRCTFVALGGGVIGDMCGYAAASFLRGVNFIQIPTTVMAQVDSSVGGKTGINHRLGKNLIGAFYQPQCVLIDTDTLNTLPDRELASGLAEVVKYGLIRDANFFEWQEKNMPALMARDPSALAYAIKRSCENKAEVVSLDEKESGLRATLNLGHTFGHAIETGFGYGQWLHGEAVAAGMVMAVDMSYRLGWIDESIVNRAHNILQQAKLPTAPPETMTVEMFKSVMAVDKKVADGLLRLILLKGPLGNCVFTGDYDRKALDETLHAFCKS.

The transit peptide at 1–68 (MAAFSLSAKQ…RASASSTAPV (68 aa)) directs the protein to the chloroplast. Residues N122, 153–155 (DGE), K158, 186–191 (GGVIGD), 211–212 (TT), K224, K233, and 251–254 (TLNT) contribute to the NAD(+) site. E266 contributes to the a divalent metal cation binding site. NAD(+) is bound at residue K308. Residues H329 and H346 each contribute to the a divalent metal cation site.

Belongs to the sugar phosphate cyclases superfamily. Dehydroquinate synthase family. In terms of assembly, homodimer. It depends on a divalent metal cation as a cofactor. NAD(+) serves as cofactor.

The protein localises to the plastid. The protein resides in the chloroplast. It carries out the reaction 7-phospho-2-dehydro-3-deoxy-D-arabino-heptonate = 3-dehydroquinate + phosphate. The protein operates within metabolic intermediate biosynthesis; chorismate biosynthesis; chorismate from D-erythrose 4-phosphate and phosphoenolpyruvate: step 2/7. In terms of biological role, catalyzes the second step in the shikimate pathway. This Actinidia chinensis var. chinensis (Chinese soft-hair kiwi) protein is 3-dehydroquinate synthase, chloroplastic (DHQS).